A 145-amino-acid chain; its full sequence is D-aminoacyl-tRNA deacylase (145 aa).

The Gly-cisPro motif, important for rejection of L-amino acids motif lies at 137-138; that stretch reads GP.

This sequence belongs to the DTD family. As to quaternary structure, homodimer.

It is found in the cytoplasm. The enzyme catalyses glycyl-tRNA(Ala) + H2O = tRNA(Ala) + glycine + H(+). The catalysed reaction is a D-aminoacyl-tRNA + H2O = a tRNA + a D-alpha-amino acid + H(+). An aminoacyl-tRNA editing enzyme that deacylates mischarged D-aminoacyl-tRNAs. Also deacylates mischarged glycyl-tRNA(Ala), protecting cells against glycine mischarging by AlaRS. Acts via tRNA-based rather than protein-based catalysis; rejects L-amino acids rather than detecting D-amino acids in the active site. By recycling D-aminoacyl-tRNA to D-amino acids and free tRNA molecules, this enzyme counteracts the toxicity associated with the formation of D-aminoacyl-tRNA entities in vivo and helps enforce protein L-homochirality. The protein is D-aminoacyl-tRNA deacylase of Pseudoalteromonas atlantica (strain T6c / ATCC BAA-1087).